A 354-amino-acid chain; its full sequence is Ferrochelatase (354 aa).

H214 and E295 together coordinate Fe cation.

Belongs to the ferrochelatase family.

The protein localises to the cytoplasm. It catalyses the reaction heme b + 2 H(+) = protoporphyrin IX + Fe(2+). It functions in the pathway porphyrin-containing compound metabolism; protoheme biosynthesis; protoheme from protoporphyrin-IX: step 1/1. In terms of biological role, catalyzes the ferrous insertion into protoporphyrin IX. The chain is Ferrochelatase from Burkholderia ambifaria (strain ATCC BAA-244 / DSM 16087 / CCUG 44356 / LMG 19182 / AMMD) (Burkholderia cepacia (strain AMMD)).